A 178-amino-acid chain; its full sequence is uncharacterized protein (178 aa).

The next 5 helical transmembrane spans lie at 1 to 21 (MISIYLFMAFFIANLLGYGGG), 47 to 67 (MLALANALPGPIATKIAAYVG), 75 to 95 (GFLIALIATVVPSALALIVLL), 117 to 137 (VIAVMMLILTWQIGADGIKAI), and 158 to 178 (MHPAFLIIAAFLYGGLVIPYL).

The protein belongs to the chromate ion transporter (CHR) (TC 2.A.51) family.

The protein localises to the cell membrane. This is an uncharacterized protein from Bacillus subtilis (strain 168).